Consider the following 113-residue polypeptide: Hydrogenase maturation factor HypA (113 aa).

His2 lines the Ni(2+) pocket. Cys73, Cys76, Cys89, and Cys92 together coordinate Zn(2+).

The protein belongs to the HypA/HybF family.

In terms of biological role, involved in the maturation of [NiFe] hydrogenases. Required for nickel insertion into the metal center of the hydrogenase. This is Hydrogenase maturation factor HypA from Moorella thermoacetica (strain ATCC 39073 / JCM 9320).